A 337-amino-acid chain; its full sequence is Eukaryotic translation initiation factor 3 subunit H (337 aa).

An MPN domain is found at 21 to 153 (VQCDGLAVMK…LKAYRLTPQA (133 aa)).

The protein belongs to the eIF-3 subunit H family. Component of the eukaryotic translation initiation factor 3 (eIF-3) complex. The eIF-3 complex interacts with pix. Interacts with mxt.

Its subcellular location is the cytoplasm. Its function is as follows. Component of the eukaryotic translation initiation factor 3 (eIF-3) complex, which is involved in protein synthesis of a specialized repertoire of mRNAs and, together with other initiation factors, stimulates binding of mRNA and methionyl-tRNAi to the 40S ribosome. The eIF-3 complex specifically targets and initiates translation of a subset of mRNAs involved in cell proliferation. This is Eukaryotic translation initiation factor 3 subunit H from Drosophila virilis (Fruit fly).